The primary structure comprises 245 residues: tRNA (guanine-N(1)-)-methyltransferase (245 aa).

Residues Gly111 and Met131–Leu136 each bind S-adenosyl-L-methionine.

It belongs to the RNA methyltransferase TrmD family. As to quaternary structure, homodimer.

Its subcellular location is the cytoplasm. It carries out the reaction guanosine(37) in tRNA + S-adenosyl-L-methionine = N(1)-methylguanosine(37) in tRNA + S-adenosyl-L-homocysteine + H(+). Specifically methylates guanosine-37 in various tRNAs. The chain is tRNA (guanine-N(1)-)-methyltransferase from Staphylococcus aureus (strain MRSA252).